The primary structure comprises 103 residues: Large ribosomal subunit protein bL21 (103 aa).

Belongs to the bacterial ribosomal protein bL21 family. Part of the 50S ribosomal subunit. Contacts protein L20.

This protein binds to 23S rRNA in the presence of protein L20. The sequence is that of Large ribosomal subunit protein bL21 from Ralstonia pickettii (strain 12J).